A 637-amino-acid chain; its full sequence is Limonene synthase, chloroplastic (637 aa).

A chloroplast-targeting transit peptide spans 1–56; that stretch reads MALLSIVSLQVPKSCGLKSLISSSNVQKALCISTAVPTLRMRRRQKALVINMKLTT. Residues D388, D392, and D540 each coordinate Mg(2+). The short motif at 388–392 is the DDXXD motif element; the sequence is DDIYD.

Belongs to the terpene synthase family. Tpsd subfamily. Mg(2+) is required as a cofactor. Mn(2+) serves as cofactor. Requires K(+) as cofactor.

It is found in the plastid. Its subcellular location is the chloroplast. It catalyses the reaction (2E)-geranyl diphosphate = (4S)-limonene + diphosphate. It functions in the pathway terpene metabolism; oleoresin biosynthesis. Involved in defensive oleoresin formation in conifers in response to insect attack or other injury. Involved in monoterpene (C10) olefins biosynthesis. The polypeptide is Limonene synthase, chloroplastic (ag10) (Abies grandis (Grand fir)).